We begin with the raw amino-acid sequence, 251 residues long: Tritrans,polycis-undecaprenyl-diphosphate synthase (geranylgeranyl-diphosphate specific) (251 aa).

Asp-29 is an active-site residue. Mg(2+) is bound at residue Asp-29. Residues 30–33 (GNRR), Phe-34, His-46, and 74–76 (STE) each bind substrate. Catalysis depends on Asn-77, which acts as the Proton acceptor. Substrate contacts are provided by residues Phe-78, Arg-80, Arg-200, and 206 to 208 (RLS).

It belongs to the UPP synthase family. Homodimer. Mg(2+) is required as a cofactor.

The catalysed reaction is geranylgeranyl diphosphate + 7 isopentenyl diphosphate = tri-trans,hepta-cis-undecaprenyl diphosphate + 7 diphosphate. In terms of biological role, catalyzes the sequential condensation of isopentenyl diphosphate (IPP) with geranylgeranyl diphosphate (GGPP) to yield (2Z,6Z,10Z,14Z,18Z,22Z,26Z,30E,34E,38E)-undecaprenyl diphosphate (tritrans,heptacis-UPP). It is probably the precursor of glycosyl carrier lipids. The chain is Tritrans,polycis-undecaprenyl-diphosphate synthase (geranylgeranyl-diphosphate specific) from Archaeoglobus fulgidus (strain ATCC 49558 / DSM 4304 / JCM 9628 / NBRC 100126 / VC-16).